The chain runs to 63 residues: DNA gyrase inhibitor YacG (63 aa).

Residues cysteine 9, cysteine 12, cysteine 28, and cysteine 32 each coordinate Zn(2+).

It belongs to the DNA gyrase inhibitor YacG family. In terms of assembly, interacts with GyrB. The cofactor is Zn(2+).

In terms of biological role, inhibits all the catalytic activities of DNA gyrase by preventing its interaction with DNA. Acts by binding directly to the C-terminal domain of GyrB, which probably disrupts DNA binding by the gyrase. The protein is DNA gyrase inhibitor YacG of Salmonella choleraesuis (strain SC-B67).